The following is a 130-amino-acid chain: MPRVKRGTHRRASRKKVLARASGYFLTKSKLYRAAMEAVDRGLKFAYVGRKRKKRDYRRLWIVRINASCRAAGLSYSKFVHGLKAAGLDLNRKVLADVALHDDAAFRNLAELAKSALAVKESARLALEKE.

It belongs to the bacterial ribosomal protein bL20 family.

Functionally, binds directly to 23S ribosomal RNA and is necessary for the in vitro assembly process of the 50S ribosomal subunit. It is not involved in the protein synthesizing functions of that subunit. In Solibacter usitatus (strain Ellin6076), this protein is Large ribosomal subunit protein bL20.